The primary structure comprises 524 residues: Vang-like protein 1 (524 aa).

Residues 1–15 show a composition bias toward low complexity; that stretch reads MDTESTYSGYSYYSS. The tract at residues 1-85 is disordered; it reads MDTESTYSGY…TTAITGTSEH (85 aa). Residues 1–117 are Cytoplasmic-facing; the sequence is MDTESTYSGY…KRYLGLTVAS (117 aa). The segment covering 73–85 has biased composition (polar residues); the sequence is GETTTAITGTSEH. Serine 86 and serine 88 each carry phosphoserine. Residues 118–138 form a helical membrane-spanning segment; that stretch reads FLGLLVFLTPIAFILLPPILW. The Extracellular portion of the chain corresponds to 139–151; it reads RDELEPCGTICEG. A helical transmembrane segment spans residues 152–172; the sequence is LFISMAFKLLILLIGTWALFF. Over 173–182 the chain is Cytoplasmic; that stretch reads RKRRADMPRV. A helical membrane pass occupies residues 183-203; that stretch reads FVFRALLLVLIFLFVVSYWLF. Over 204-222 the chain is Extracellular; the sequence is YGVRILDSRDRNYQGIVQY. The chain crosses the membrane as a helical span at residues 223–243; that stretch reads AVSLVDALLFIHYLAIVLLEL. Over 244 to 524 the chain is Cytoplasmic; sequence RQLQPMFTLQ…VLRLQSETSV (281 aa).

Belongs to the Vang family. As to quaternary structure, heterodimer with VANGL2. Interacts through its C-terminal region with the N-terminal half of DVL1, DVL2 and DVL3. The PDZ domain of DVL1, DVL2 and DVL3 is required for the interaction. In terms of tissue distribution, according to PubMed:11956595, ubiquitously expressed. According to PubMed:12011995, expressed specifically in testis and ovary.

The protein localises to the cell membrane. The sequence is that of Vang-like protein 1 (VANGL1) from Homo sapiens (Human).